A 56-amino-acid chain; its full sequence is MAVQQNKKSRSKRGMRRSHDALSTAQLSVDATSGELHRRHNVTADGYYRGQKVINK.

The tract at residues 1–37 is disordered; that stretch reads MAVQQNKKSRSKRGMRRSHDALSTAQLSVDATSGELH. Over residues 7-16 the composition is skewed to basic residues; sequence KKSRSKRGMR. Residues 21-31 show a composition bias toward polar residues; that stretch reads ALSTAQLSVDA.

It belongs to the bacterial ribosomal protein bL32 family.

This is Large ribosomal subunit protein bL32 from Shewanella loihica (strain ATCC BAA-1088 / PV-4).